The sequence spans 150 residues: Ribosomal RNA large subunit methyltransferase H (150 aa).

S-adenosyl-L-methionine is bound by residues Leu-68, Gly-97, and 116 to 121 (LSAMTL).

It belongs to the RNA methyltransferase RlmH family. As to quaternary structure, homodimer.

Its subcellular location is the cytoplasm. The catalysed reaction is pseudouridine(1915) in 23S rRNA + S-adenosyl-L-methionine = N(3)-methylpseudouridine(1915) in 23S rRNA + S-adenosyl-L-homocysteine + H(+). Specifically methylates the pseudouridine at position 1915 (m3Psi1915) in 23S rRNA. The protein is Ribosomal RNA large subunit methyltransferase H of Prochlorococcus marinus (strain MIT 9303).